We begin with the raw amino-acid sequence, 60 residues long: Large ribosomal subunit protein uL30 (60 aa).

Belongs to the universal ribosomal protein uL30 family. In terms of assembly, part of the 50S ribosomal subunit.

This chain is Large ribosomal subunit protein uL30, found in Shewanella loihica (strain ATCC BAA-1088 / PV-4).